Consider the following 431-residue polypeptide: Enolase (431 aa).

A (2R)-2-phosphoglycerate-binding site is contributed by Q166. The active-site Proton donor is the E208. D245, E288, and D315 together coordinate Mg(2+). K340, R369, S370, and K391 together coordinate (2R)-2-phosphoglycerate. K340 (proton acceptor) is an active-site residue.

It belongs to the enolase family. The cofactor is Mg(2+).

It localises to the cytoplasm. The protein resides in the secreted. Its subcellular location is the cell surface. The enzyme catalyses (2R)-2-phosphoglycerate = phosphoenolpyruvate + H2O. It participates in carbohydrate degradation; glycolysis; pyruvate from D-glyceraldehyde 3-phosphate: step 4/5. Catalyzes the reversible conversion of 2-phosphoglycerate (2-PG) into phosphoenolpyruvate (PEP). It is essential for the degradation of carbohydrates via glycolysis. The sequence is that of Enolase from Clostridium acetobutylicum (strain ATCC 824 / DSM 792 / JCM 1419 / IAM 19013 / LMG 5710 / NBRC 13948 / NRRL B-527 / VKM B-1787 / 2291 / W).